A 388-amino-acid chain; its full sequence is Phosphopentomutase (388 aa).

Residues Asp-11, Asp-283, His-288, Asp-324, His-325, and His-336 each contribute to the Mn(2+) site.

The protein belongs to the phosphopentomutase family. Mn(2+) serves as cofactor.

The protein resides in the cytoplasm. It catalyses the reaction 2-deoxy-alpha-D-ribose 1-phosphate = 2-deoxy-D-ribose 5-phosphate. It carries out the reaction alpha-D-ribose 1-phosphate = D-ribose 5-phosphate. Its pathway is carbohydrate degradation; 2-deoxy-D-ribose 1-phosphate degradation; D-glyceraldehyde 3-phosphate and acetaldehyde from 2-deoxy-alpha-D-ribose 1-phosphate: step 1/2. Its function is as follows. Isomerase that catalyzes the conversion of deoxy-ribose 1-phosphate (dRib-1-P) and ribose 1-phosphate (Rib-1-P) to deoxy-ribose 5-phosphate (dRib-5-P) and ribose 5-phosphate (Rib-5-P), respectively. This Enterococcus faecalis (strain ATCC 700802 / V583) protein is Phosphopentomutase.